We begin with the raw amino-acid sequence, 189 residues long: NADH-ubiquinone oxidoreductase 20.9 kDa subunit (189 aa).

The chain crosses the membrane as a helical span at residues 73–88 (AMRLATAVGFFGGFLY).

In terms of assembly, complex I is composed of about 40 different subunits. The N-terminus is blocked.

It localises to the mitochondrion inner membrane. The catalysed reaction is a ubiquinone + NADH + 5 H(+)(in) = a ubiquinol + NAD(+) + 4 H(+)(out). Its function is as follows. Transfer of electrons from NADH to the respiratory chain. The immediate electron acceptor for the enzyme is believed to be ubiquinone. In Neurospora crassa (strain ATCC 24698 / 74-OR23-1A / CBS 708.71 / DSM 1257 / FGSC 987), this protein is NADH-ubiquinone oxidoreductase 20.9 kDa subunit (nuo20.9).